We begin with the raw amino-acid sequence, 57 residues long: LALLFLVLSAGSGFTQGVRNHVTCRINRGFCVPIRCPGRTRQIGTCFGPRIKCCRSW.

Residue Gln-16 is modified to Pyrrolidone carboxylic acid. Cystine bridges form between Cys-24–Cys-53, Cys-31–Cys-46, and Cys-36–Cys-54.

This sequence belongs to the beta-defensin family. Neutrophilic granules.

The protein localises to the secreted. Has bactericidal activity. Active against E.coli ML35 and S.aureus 502A. The sequence is that of Beta-defensin 3 (DEFB3) from Bos taurus (Bovine).